Reading from the N-terminus, the 854-residue chain is Translation initiation factor IF-2 (854 aa).

The span at 61 to 72 shows a compositional bias: basic residues; the sequence is KNIKTPTAKKPK. 2 disordered regions span residues 61–115 and 167–186; these read KNIK…LASA and ESLK…KKES. Residues 73–108 show a composition bias toward basic and acidic residues; it reads KENAKDQEKLNESEKKEPKKEESKEQEKQEIIDTHK. Residues 353–520 form the tr-type G domain; that stretch reads TRAPVITIMG…IVLLQADILE (168 aa). The segment at 362 to 369 is G1; it reads GHVDHGKT. A GTP-binding site is contributed by 362–369; that stretch reads GHVDHGKT. The interval 387 to 391 is G2; the sequence is GITQH. The interval 408-411 is G3; the sequence is DTPG. Residues 408 to 412 and 462 to 465 contribute to the GTP site; these read DTPGH and NKMD. Residues 462–465 form a G4 region; that stretch reads NKMD. The tract at residues 498 to 500 is G5; the sequence is SAK.

This sequence belongs to the TRAFAC class translation factor GTPase superfamily. Classic translation factor GTPase family. IF-2 subfamily.

Its subcellular location is the cytoplasm. In terms of biological role, one of the essential components for the initiation of protein synthesis. Protects formylmethionyl-tRNA from spontaneous hydrolysis and promotes its binding to the 30S ribosomal subunits. Also involved in the hydrolysis of GTP during the formation of the 70S ribosomal complex. This Campylobacter jejuni subsp. doylei (strain ATCC BAA-1458 / RM4099 / 269.97) protein is Translation initiation factor IF-2.